The sequence spans 384 residues: ATP phosphoribosyltransferase regulatory subunit (384 aa).

Belongs to the class-II aminoacyl-tRNA synthetase family. HisZ subfamily. In terms of assembly, heteromultimer composed of HisG and HisZ subunits.

It is found in the cytoplasm. The protein operates within amino-acid biosynthesis; L-histidine biosynthesis; L-histidine from 5-phospho-alpha-D-ribose 1-diphosphate: step 1/9. Required for the first step of histidine biosynthesis. May allow the feedback regulation of ATP phosphoribosyltransferase activity by histidine. The sequence is that of ATP phosphoribosyltransferase regulatory subunit from Rhodospirillum rubrum (strain ATCC 11170 / ATH 1.1.1 / DSM 467 / LMG 4362 / NCIMB 8255 / S1).